The sequence spans 515 residues: Integrator complex subunit 14 (515 aa).

The 203-residue stretch at 2–204 folds into the VWFA domain; the sequence is PTVVVMDVSL…KNVQSMFGKL (203 aa). Mg(2+) contacts are provided by S10, S12, and T86. The residue at position 418 (K418) is an N6-acetyllysine.

This sequence belongs to the Integrator subunit 14 family. In terms of assembly, component of the Integrator complex, composed of core subunits INTS1, INTS2, INTS3, INTS4, INTS5, INTS6, INTS7, INTS8, INTS9/RC74, INTS10, INTS11/CPSF3L, INTS12, INTS13, INTS14 and INTS15. The core complex associates with protein phosphatase 2A subunits PPP2CA and PPP2R1A, to form the Integrator-PP2A (INTAC) complex. INTS14 is part of the tail subcomplex, composed of INTS10, INTS13, INTS14 and INTS15.

The protein resides in the nucleus. Functionally, component of the integrator complex, a multiprotein complex that terminates RNA polymerase II (Pol II) transcription in the promoter-proximal region of genes. The integrator complex provides a quality checkpoint during transcription elongation by driving premature transcription termination of transcripts that are unfavorably configured for transcriptional elongation: the complex terminates transcription by (1) catalyzing dephosphorylation of the C-terminal domain (CTD) of Pol II subunit POLR2A/RPB1 and SUPT5H/SPT5, (2) degrading the exiting nascent RNA transcript via endonuclease activity and (3) promoting the release of Pol II from bound DNA. The integrator complex is also involved in terminating the synthesis of non-coding Pol II transcripts, such as enhancer RNAs (eRNAs), small nuclear RNAs (snRNAs), telomerase RNAs and long non-coding RNAs (lncRNAs). Within the integrator complex, INTS14 is part of the integrator tail module that acts as a platform for the recruitment of transcription factors at promoters. This Mus musculus (Mouse) protein is Integrator complex subunit 14.